Reading from the N-terminus, the 338-residue chain is tRNA N6-adenosine threonylcarbamoyltransferase (338 aa).

Fe cation contacts are provided by H111 and H115. Substrate is bound by residues 134–138 (LVSGG), D167, G180, and N272. A Fe cation-binding site is contributed by D300.

It belongs to the KAE1 / TsaD family. Requires Fe(2+) as cofactor.

It localises to the cytoplasm. The enzyme catalyses L-threonylcarbamoyladenylate + adenosine(37) in tRNA = N(6)-L-threonylcarbamoyladenosine(37) in tRNA + AMP + H(+). Required for the formation of a threonylcarbamoyl group on adenosine at position 37 (t(6)A37) in tRNAs that read codons beginning with adenine. Is involved in the transfer of the threonylcarbamoyl moiety of threonylcarbamoyl-AMP (TC-AMP) to the N6 group of A37, together with TsaE and TsaB. TsaD likely plays a direct catalytic role in this reaction. This Vibrio atlanticus (strain LGP32) (Vibrio splendidus (strain Mel32)) protein is tRNA N6-adenosine threonylcarbamoyltransferase.